A 246-amino-acid polypeptide reads, in one-letter code: UPF0758 protein SSU98_1084 (246 aa).

The MPN domain occupies 103–225 (RILGSEKLGR…YYSFREESDV (123 aa)). The Zn(2+) site is built by His174, His176, and Asp187. A JAMM motif motif is present at residues 174–187 (HNHPSGSVQPSRND).

The protein belongs to the UPF0758 family.

The protein is UPF0758 protein SSU98_1084 of Streptococcus suis (strain 98HAH33).